We begin with the raw amino-acid sequence, 156 residues long: Persephin (156 aa).

The signal sequence occupies residues 1-21; it reads MAVGKFLLGSLLLLSLQLGQG. Intrachain disulfides connect Cys66–Cys124, Cys93–Cys152, and Cys97–Cys154.

It belongs to the TGF-beta family. GDNF subfamily. In terms of assembly, homodimer; disulfide-linked. Interacts with GFRA4 coreceptor and RET: forms a 2:2:2 ternary complex composed of PSPN ligand, GFRA4 and RET receptor.

The protein localises to the secreted. In terms of biological role, growth factor that exhibits neurotrophic activity on mesencephalic dopaminergic and motor neurons. Acts by binding to its coreceptor, GFRA4, leading to autophosphorylation and activation of the RET receptor. The polypeptide is Persephin (Homo sapiens (Human)).